The primary structure comprises 741 residues: Polyribonucleotide nucleotidyltransferase (741 aa).

Mg(2+) is bound by residues D489 and D495. In terms of domain architecture, KH spans 556–615; that stretch reads PKIDSIQIPVDKIKVVIGKGGETIDKIIAETGVTIDIDEEGLVQIFSSDQDAIDRAKTII. Positions 625 to 693 constitute an S1 motif domain; it reads GEVYTVPVVR…EKGRVDASIK (69 aa). The tract at residues 696–741 is disordered; the sequence is LPKPEKNEDGENGEEHRHCCCSHHKPDHHSESMEAPKKSDESETKE. Composition is skewed to basic and acidic residues over residues 698–713 and 723–741; these read KPEKNEDGENGEEHRH and HHSESMEAPKKSDESETKE.

This sequence belongs to the polyribonucleotide nucleotidyltransferase family. The cofactor is Mg(2+).

It is found in the cytoplasm. It catalyses the reaction RNA(n+1) + phosphate = RNA(n) + a ribonucleoside 5'-diphosphate. Its function is as follows. Involved in mRNA degradation. Catalyzes the phosphorolysis of single-stranded polyribonucleotides processively in the 3'- to 5'-direction. This is Polyribonucleotide nucleotidyltransferase from Streptococcus thermophilus (strain ATCC BAA-491 / LMD-9).